The chain runs to 694 residues: MLFARLVLLLVYLAPGSLAKPASTKKRTQWDQIAIDACAKELESHKFDTDVKGRHATLCTYEPALGSWLHCAKDVLDSRKKSKKIFEKTFSKINQYCHDYHKDEVVSNEEYYRIFANASLFIRPLDEVKENIRYPVTPNKASLDRWVWAYFGPLDNIDKGNVYGVTICLYWIGVLFIAAVYHFLNFSRLKQTVFKNKVSAFLRGHYVLPALVHNHAMSVGRWFFIGLVPTRLETLVLFGYVLLHGFLLSSYNFDHNELLSDRRSQVLIFLSDRAGILAFAHFPLIVLFGGKNSTMTWLTGIRYTAFITYHKWLGRFMLVDCTIHAIGYTYHAYIENYWKYVKYSDLWTSGRHAMIIVGILVFFSFFFFRRHYYELFVITHIILAIGFFHACWKHCYKLGWGEWIMACALFWIADRILRLIKIAIFGMPWAKLKLCGESMIEVRISKSSKWWKAEPGQYIYLYFLRPKIFWQSHPFTVMDSLVEDGELVVVITVKNGLTKKLQEYLLESEGYTEMRVLAEGPYGQSTRTHLFESLLFIAGGAGVPGPLSMAIKAGRQVKSNDSHQMIKFVWSVRNLDLLEVYRKEIMVLKELNIDTKIYFTGERKDESNTEEGAIANMSTEGRLLTTSKSAEMITDFGRPNIDEIIEEAVSGAKSLLVTCCGSEGFVDKTRELTAKRVLEHGDKWIEYVEEFQNW.

Positions 1–19 (MLFARLVLLLVYLAPGSLA) are cleaved as a signal peptide. Topologically, residues 20–163 (KPASTKKRTQ…LDNIDKGNVY (144 aa)) are extracellular. An N-linked (GlcNAc...) asparagine glycan is attached at N117. Residues 164–184 (GVTICLYWIGVLFIAAVYHFL) traverse the membrane as a helical segment. The Cytoplasmic portion of the chain corresponds to 185 to 222 (NFSRLKQTVFKNKVSAFLRGHYVLPALVHNHAMSVGRW). The chain crosses the membrane as a helical span at residues 223–243 (FFIGLVPTRLETLVLFGYVLL). The Extracellular portion of the chain corresponds to 244–267 (HGFLLSSYNFDHNELLSDRRSQVL). Residues 268–288 (IFLSDRAGILAFAHFPLIVLF) form a helical membrane-spanning segment. The region spanning 274-408 (AGILAFAHFP…GWGEWIMACA (135 aa)) is the Ferric oxidoreductase domain. Topologically, residues 289-311 (GGKNSTMTWLTGIRYTAFITYHK) are cytoplasmic. 2 residues coordinate heme: H310 and H324. Residues 312–334 (WLGRFMLVDCTIHAIGYTYHAYI) form a helical membrane-spanning segment. Residues 335–347 (ENYWKYVKYSDLW) lie on the Extracellular side of the membrane. Residues 348–368 (TSGRHAMIIVGILVFFSFFFF) traverse the membrane as a helical segment. Topologically, residues 369 to 371 (RRH) are cytoplasmic. Residues 372 to 392 (YYELFVITHIILAIGFFHACW) traverse the membrane as a helical segment. H380 and H394 together coordinate heme. The Extracellular portion of the chain corresponds to 393–403 (KHCYKLGWGEW). The chain crosses the membrane as a helical span at residues 404–424 (IMACALFWIADRILRLIKIAI). The FAD-binding FR-type domain maps to 409 to 528 (LFWIADRILR…EGPYGQSTRT (120 aa)). Over 425 to 694 (FGMPWAKLKL…IEYVEEFQNW (270 aa)) the chain is Cytoplasmic. 473-479 (HPFTVMD) is an FAD binding site. NADP(+) is bound by residues 520–523 (GPYG) and 660–661 (CG).

The protein belongs to the ferric reductase (FRE) family. The cofactor is FAD.

The protein resides in the cell membrane. It carries out the reaction 2 a Fe(II)-siderophore + NADP(+) + H(+) = 2 a Fe(III)-siderophore + NADPH. Metalloreductase responsible for reducing extracellular iron and copper prior to import. Catalyzes the reductive uptake of Fe(3+)-salts and Fe(3+) bound to catecholate or hydroxamate siderophores. Fe(3+) is reduced to Fe(2+), which then dissociates from the siderophore and can be imported by the high-affinity Fe(2+) transport complex in the plasma membrane. This chain is Ferric reductase transmembrane component 5 (FRE5), found in Saccharomyces cerevisiae (strain ATCC 204508 / S288c) (Baker's yeast).